A 441-amino-acid chain; its full sequence is Ribulose bisphosphate carboxylase large chain (441 aa).

Substrate contacts are provided by Asn89 and Thr139. Lys141 functions as the Proton acceptor in the catalytic mechanism. Lys143 is a substrate binding site. Positions 167, 169, and 170 each coordinate Mg(2+). At Lys167 the chain carries N6-carboxylysine. His260 (proton acceptor) is an active-site residue. Substrate is bound by residues Arg261, His293, and Ser345.

The protein belongs to the RuBisCO large chain family. Type I subfamily. In terms of assembly, heterohexadecamer of 8 large chains and 8 small chains; disulfide-linked. The disulfide link is formed within the large subunit homodimers. The cofactor is Mg(2+). The disulfide bond which can form in the large chain dimeric partners within the hexadecamer appears to be associated with oxidative stress and protein turnover.

The protein localises to the plastid. It localises to the chloroplast. It carries out the reaction 2 (2R)-3-phosphoglycerate + 2 H(+) = D-ribulose 1,5-bisphosphate + CO2 + H2O. The catalysed reaction is D-ribulose 1,5-bisphosphate + O2 = 2-phosphoglycolate + (2R)-3-phosphoglycerate + 2 H(+). Its function is as follows. RuBisCO catalyzes two reactions: the carboxylation of D-ribulose 1,5-bisphosphate, the primary event in carbon dioxide fixation, as well as the oxidative fragmentation of the pentose substrate in the photorespiration process. Both reactions occur simultaneously and in competition at the same active site. This is Ribulose bisphosphate carboxylase large chain from Viola sororia (Woolly blue violet).